We begin with the raw amino-acid sequence, 298 residues long: ATP synthase gamma chain (298 aa).

This sequence belongs to the ATPase gamma chain family. As to quaternary structure, F-type ATPases have 2 components, CF(1) - the catalytic core - and CF(0) - the membrane proton channel. CF(1) has five subunits: alpha(3), beta(3), gamma(1), delta(1), epsilon(1). CF(0) has three main subunits: a, b and c.

The protein resides in the cell inner membrane. In terms of biological role, produces ATP from ADP in the presence of a proton gradient across the membrane. The gamma chain is believed to be important in regulating ATPase activity and the flow of protons through the CF(0) complex. This chain is ATP synthase gamma chain, found in Zymomonas mobilis subsp. mobilis (strain ATCC 31821 / ZM4 / CP4).